Here is a 160-residue protein sequence, read N- to C-terminus: UPF0225 protein CGSHiEE_01665 (160 aa).

Belongs to the UPF0225 family.

This is UPF0225 protein CGSHiEE_01665 from Haemophilus influenzae (strain PittEE).